Reading from the N-terminus, the 327-residue chain is Small ribosomal subunit protein RACK1z (327 aa).

WD repeat units lie at residues 13 to 44, 61 to 91, 103 to 133, 148 to 180, 192 to 222, 233 to 262, and 293 to 323; these read AHTD…ILWK, GHSH…RLWD, GHTK…KLWN, GHRD…KVWN, GHTG…LLWD, EANS…KIWD, and RKVI…RVWG.

This sequence belongs to the WD repeat G protein beta family. Ribosomal protein RACK1 subfamily. In terms of assembly, homodimer and heterodimer with RACK1B or RACK1C. Interacts with NUDT7. Interacts with GB1, MEKK1, MKK4, MKK5, MPK3 and MPK6, but not with GPA1 or MPK4. Interacts with OFUT20. Widely expressed.

It is found in the cytoplasm. Its subcellular location is the nucleus. In terms of biological role, major component of the RACK1 regulatory proteins that play a role in multiple signal transduction pathways. Involved in multiple hormone responses and developmental processes. MAPK cascade scaffolding protein involved in the protease IV and ArgC signaling pathway but not the flg22 pathway. The sequence is that of Small ribosomal subunit protein RACK1z from Arabidopsis thaliana (Mouse-ear cress).